A 272-amino-acid polypeptide reads, in one-letter code: Phosphate import ATP-binding protein PstB 1 (272 aa).

The ABC transporter domain maps to 26–267; it reads ITIENLDLHY…PMKKQTEDYI (242 aa). 58–65 serves as a coordination point for ATP; that stretch reads GPSGCGKS.

Belongs to the ABC transporter superfamily. Phosphate importer (TC 3.A.1.7) family. As to quaternary structure, the complex is composed of two ATP-binding proteins (PstB), two transmembrane proteins (PstC and PstA) and a solute-binding protein (PstS).

Its subcellular location is the cell inner membrane. It catalyses the reaction phosphate(out) + ATP + H2O = ADP + 2 phosphate(in) + H(+). Part of the ABC transporter complex PstSACB involved in phosphate import. Responsible for energy coupling to the transport system. This Vibrio vulnificus (strain YJ016) protein is Phosphate import ATP-binding protein PstB 1.